The primary structure comprises 92 residues: Alpha-defensin 25 (92 aa).

The signal sequence occupies residues 1–19; the sequence is MKTLVLLSALALLAFQVQA. Positions 20-57 are excised as a propeptide; that stretch reads DPIQNRDEESKIDEQPGKEDQAVSVSFGDPEGSSLQEE. Over residues 24–40 the composition is skewed to basic and acidic residues; the sequence is NRDEESKIDEQPGKEDQ. Residues 24–53 form a disordered region; it reads NRDEESKIDEQPGKEDQAVSVSFGDPEGSS. Cystine bridges form between Cys63–Cys92, Cys65–Cys80, and Cys70–Cys91.

Belongs to the alpha-defensin family.

Its subcellular location is the secreted. May have microbicidal activities. This is Alpha-defensin 25 (Defa25) from Mus musculus (Mouse).